The chain runs to 445 residues: Argininosuccinate synthase (445 aa).

ATP-binding positions include 17 to 25 and alanine 43; that span reads AFSGGLDTS. Tyrosine 99 is an L-citrulline binding site. ATP-binding residues include glycine 129 and threonine 131. L-aspartate is bound by residues threonine 131, asparagine 135, and aspartate 136. An L-citrulline-binding site is contributed by asparagine 135. Aspartate 136 contributes to the ATP binding site. Residues arginine 139 and serine 192 each contribute to the L-citrulline site. Aspartate 194 provides a ligand contact to ATP. Residues threonine 201, glutamate 203, and glutamate 280 each coordinate L-citrulline.

This sequence belongs to the argininosuccinate synthase family. Type 2 subfamily. In terms of assembly, homotetramer.

The protein localises to the cytoplasm. It carries out the reaction L-citrulline + L-aspartate + ATP = 2-(N(omega)-L-arginino)succinate + AMP + diphosphate + H(+). It participates in amino-acid biosynthesis; L-arginine biosynthesis; L-arginine from L-ornithine and carbamoyl phosphate: step 2/3. The sequence is that of Argininosuccinate synthase (argG) from Burkholderia multivorans (strain ATCC 17616 / 249).